The chain runs to 232 residues: Glutathione S-transferase U10 (232 aa).

The GST N-terminal domain occupies 6 to 85 (SKVILHGTWI…YIDETWTNSP (80 aa)). Glutathione is bound by residues 16–17 (ST), 42–43 (NK), 56–57 (KI), and 69–70 (ES). Positions 91-226 (DPYERAQVRF…FIQKYRQKCL (136 aa)) constitute a GST C-terminal domain.

This sequence belongs to the GST superfamily. Tau family.

It localises to the cytoplasm. The protein resides in the cytosol. The catalysed reaction is RX + glutathione = an S-substituted glutathione + a halide anion + H(+). In terms of biological role, may be involved in the conjugation of reduced glutathione to a wide number of exogenous and endogenous hydrophobic electrophiles and have a detoxification role against certain herbicides. This Arabidopsis thaliana (Mouse-ear cress) protein is Glutathione S-transferase U10 (GSTU10).